The primary structure comprises 299 residues: UPF0282 protein TK1681 (299 aa).

The protein belongs to the UPF0282 family.

The protein is UPF0282 protein TK1681 of Thermococcus kodakarensis (strain ATCC BAA-918 / JCM 12380 / KOD1) (Pyrococcus kodakaraensis (strain KOD1)).